Consider the following 162-residue polypeptide: 2-C-methyl-D-erythritol 2,4-cyclodiphosphate synthase (162 aa).

A divalent metal cation is bound by residues Asp-10 and His-12. Residues 10–12 (DVH) and 36–37 (HS) contribute to the 4-CDP-2-C-methyl-D-erythritol 2-phosphate site. Residue His-44 participates in a divalent metal cation binding. Residues 58–60 (DIG), 63–67 (FPDTD), 102–108 (AQAPKMA), 134–137 (TTTE), Phe-141, and Arg-144 contribute to the 4-CDP-2-C-methyl-D-erythritol 2-phosphate site.

The protein belongs to the IspF family. Homotrimer. The cofactor is a divalent metal cation.

It carries out the reaction 4-CDP-2-C-methyl-D-erythritol 2-phosphate = 2-C-methyl-D-erythritol 2,4-cyclic diphosphate + CMP. The protein operates within isoprenoid biosynthesis; isopentenyl diphosphate biosynthesis via DXP pathway; isopentenyl diphosphate from 1-deoxy-D-xylulose 5-phosphate: step 4/6. Its function is as follows. Involved in the biosynthesis of isopentenyl diphosphate (IPP) and dimethylallyl diphosphate (DMAPP), two major building blocks of isoprenoid compounds. Catalyzes the conversion of 4-diphosphocytidyl-2-C-methyl-D-erythritol 2-phosphate (CDP-ME2P) to 2-C-methyl-D-erythritol 2,4-cyclodiphosphate (ME-CPP) with a corresponding release of cytidine 5-monophosphate (CMP). The chain is 2-C-methyl-D-erythritol 2,4-cyclodiphosphate synthase from Pseudoalteromonas atlantica (strain T6c / ATCC BAA-1087).